We begin with the raw amino-acid sequence, 267 residues long: 5'-nucleotidase SurE (267 aa).

Residues aspartate 14, aspartate 15, serine 45, and asparagine 100 each contribute to the a divalent metal cation site.

This sequence belongs to the SurE nucleotidase family. A divalent metal cation is required as a cofactor.

The protein resides in the cytoplasm. It carries out the reaction a ribonucleoside 5'-phosphate + H2O = a ribonucleoside + phosphate. Functionally, nucleotidase that shows phosphatase activity on nucleoside 5'-monophosphates. The protein is 5'-nucleotidase SurE of Methanosarcina acetivorans (strain ATCC 35395 / DSM 2834 / JCM 12185 / C2A).